A 262-amino-acid chain; its full sequence is Polyamine aminopropyltransferase (262 aa).

The 249-residue stretch at 1 to 249 folds into the PABS domain; that stretch reads MWITQEITPY…DIHRAAFALP (249 aa). Asparagine 29 contributes to the S-methyl-5'-thioadenosine binding site. Aspartate 83 is a binding site for spermidine. Residue aspartate 155 is the Proton acceptor of the active site.

The protein belongs to the spermidine/spermine synthase family. As to quaternary structure, homodimer or homotetramer.

Its subcellular location is the cytoplasm. It catalyses the reaction S-adenosyl 3-(methylsulfanyl)propylamine + putrescine = S-methyl-5'-thioadenosine + spermidine + H(+). It functions in the pathway amine and polyamine biosynthesis; spermidine biosynthesis; spermidine from putrescine: step 1/1. Its function is as follows. Catalyzes the irreversible transfer of a propylamine group from the amino donor S-adenosylmethioninamine (decarboxy-AdoMet) to putrescine (1,4-diaminobutane) to yield spermidine. This Helicobacter pylori (strain P12) protein is Polyamine aminopropyltransferase.